We begin with the raw amino-acid sequence, 166 residues long: Heme-degrading monooxygenase HmoB (166 aa).

Residue asparagine 33 coordinates Fe cation. An ABM domain is found at 66–153; that stretch reads FAVLNNIAVT…SAGIDTTSIF (88 aa). Residue histidine 138 coordinates heme.

This sequence belongs to the antibiotic biosynthesis monooxygenase family. In terms of assembly, homodimer.

It is found in the cytoplasm. It carries out the reaction heme b + 3 reduced [NADPH--hemoprotein reductase] + 3 O2 = biliverdin IXalpha + CO + Fe(2+) + 3 oxidized [NADPH--hemoprotein reductase] + 3 H2O + H(+). Functionally, catalyzes the oxidative degradation of the heme macrocyclic porphyrin ring in the presence of a suitable electron donor such as ascorbate or NADPH--cytochrome P450 reductase, with subsequent release of free iron. The sequence is that of Heme-degrading monooxygenase HmoB (hmoB) from Bacillus subtilis (strain 168).